The chain runs to 104 residues: Phosphocarrier protein HPr (104 aa).

In terms of domain architecture, HPr spans Glu17 to Leu104. His31 (pros-phosphohistidine intermediate) is an active-site residue.

Belongs to the HPr family.

It localises to the cytoplasm. Functionally, general (non sugar-specific) component of the phosphoenolpyruvate-dependent sugar phosphotransferase system (sugar PTS). This major carbohydrate active-transport system catalyzes the phosphorylation of incoming sugar substrates concomitantly with their translocation across the cell membrane. The phosphoryl group from phosphoenolpyruvate (PEP) is transferred to the phosphoryl carrier protein HPr by enzyme I. Phospho-HPr then transfers it to the PTS EIIA domain. The polypeptide is Phosphocarrier protein HPr (ptsH) (Chlamydia muridarum (strain MoPn / Nigg)).